A 358-amino-acid polypeptide reads, in one-letter code: Magnesium-protoporphyrin IX monomethyl ester [oxidative] cyclase 2 (358 aa).

Belongs to the AcsF family. It depends on Fe cation as a cofactor.

It carries out the reaction Mg-protoporphyrin IX 13-monomethyl ester + 3 NADPH + 3 O2 + 2 H(+) = 3,8-divinyl protochlorophyllide a + 3 NADP(+) + 5 H2O. It functions in the pathway porphyrin-containing compound metabolism; chlorophyll biosynthesis (light-independent). Functionally, catalyzes the formation of the isocyclic ring in chlorophyll biosynthesis. Mediates the cyclase reaction, which results in the formation of divinylprotochlorophyllide (Pchlide) characteristic of all chlorophylls from magnesium-protoporphyrin IX 13-monomethyl ester (MgPMME). This chain is Magnesium-protoporphyrin IX monomethyl ester [oxidative] cyclase 2, found in Nostoc sp. (strain PCC 7120 / SAG 25.82 / UTEX 2576).